A 183-amino-acid polypeptide reads, in one-letter code: uncharacterized protein (183 aa).

It belongs to the EUO family.

This is an uncharacterized protein from Chlamydia trachomatis serovar D (strain ATCC VR-885 / DSM 19411 / UW-3/Cx).